The sequence spans 159 residues: NADH-quinone oxidoreductase subunit B (159 aa).

[4Fe-4S] cluster is bound by residues C37, C38, C102, and C132.

It belongs to the complex I 20 kDa subunit family. In terms of assembly, NDH-1 is composed of 14 different subunits. Subunits NuoB, C, D, E, F, and G constitute the peripheral sector of the complex. It depends on [4Fe-4S] cluster as a cofactor.

It is found in the cell inner membrane. The enzyme catalyses a quinone + NADH + 5 H(+)(in) = a quinol + NAD(+) + 4 H(+)(out). In terms of biological role, NDH-1 shuttles electrons from NADH, via FMN and iron-sulfur (Fe-S) centers, to quinones in the respiratory chain. Couples the redox reaction to proton translocation (for every two electrons transferred, four hydrogen ions are translocated across the cytoplasmic membrane), and thus conserves the redox energy in a proton gradient. This chain is NADH-quinone oxidoreductase subunit B, found in Vesicomyosocius okutanii subsp. Calyptogena okutanii (strain HA).